The sequence spans 125 residues: Synaptobrevin (125 aa).

Residues 1-46 (MSGPQNPQAGPGGPPSGPPQPGGPPGPPQGPPQPVQQSKRLQQTQA) are disordered. The Cytoplasmic portion of the chain corresponds to 1–103 (MSGPQNPQAG…KRKFWWKNCK (103 aa)). The segment covering 12–34 (GGPPSGPPQPGGPPGPPQGPPQP) has biased composition (pro residues). Positions 40-100 (RLQQTQAQVE…GKLKRKFWWK (61 aa)) constitute a v-SNARE coiled-coil homology domain. A helical; Anchor for type IV membrane protein transmembrane segment spans residues 104 to 123 (MMIILGGIVAVIVTVIIVWA). Residues 124–125 (AT) are Vesicular-facing.

It belongs to the synaptobrevin family.

The protein resides in the cytoplasmic vesicle. It is found in the secretory vesicle. The protein localises to the synaptic vesicle membrane. It localises to the synapse. Its subcellular location is the synaptosome. Intrinsic membrane protein of small synaptic vesicles. This is Synaptobrevin from Doryteuthis pealeii (Longfin inshore squid).